Reading from the N-terminus, the 269-residue chain is Subtilisin BL (269 aa).

Glutamine 2 provides a ligand contact to Ca(2+). The region spanning 5–268 (PWGISRVQAP…SGLVNAEAAT (264 aa)) is the Peptidase S8 domain. Aspartate 32 acts as the Charge relay system in catalysis. Aspartate 40 contacts Ca(2+). Catalysis depends on histidine 62, which acts as the Charge relay system. The Ca(2+) site is built by leucine 73, asparagine 75, isoleucine 77, valine 79, alanine 163, tyrosine 165, and alanine 168. The active-site Charge relay system is the serine 215.

This sequence belongs to the peptidase S8 family. It depends on Ca(2+) as a cofactor.

Its subcellular location is the secreted. It catalyses the reaction Hydrolysis of proteins with broad specificity for peptide bonds, and a preference for a large uncharged residue in P1. Hydrolyzes peptide amides.. Functionally, subtilisin is an extracellular alkaline serine protease, it catalyzes the hydrolysis of proteins and peptide amides. This chain is Subtilisin BL, found in Lederbergia lenta (Bacillus lentus).